A 425-amino-acid polypeptide reads, in one-letter code: Enolase (425 aa).

Residue glutamine 163 coordinates (2R)-2-phosphoglycerate. Glutamate 205 acts as the Proton donor in catalysis. Mg(2+) contacts are provided by aspartate 242, glutamate 285, and aspartate 312. Residues lysine 337, arginine 366, serine 367, and lysine 388 each contribute to the (2R)-2-phosphoglycerate site. The active-site Proton acceptor is the lysine 337.

Belongs to the enolase family. Requires Mg(2+) as cofactor.

It is found in the cytoplasm. The protein resides in the secreted. The protein localises to the cell surface. The catalysed reaction is (2R)-2-phosphoglycerate = phosphoenolpyruvate + H2O. It functions in the pathway carbohydrate degradation; glycolysis; pyruvate from D-glyceraldehyde 3-phosphate: step 4/5. Catalyzes the reversible conversion of 2-phosphoglycerate (2-PG) into phosphoenolpyruvate (PEP). It is essential for the degradation of carbohydrates via glycolysis. This is Enolase from Syntrophomonas wolfei subsp. wolfei (strain DSM 2245B / Goettingen).